The sequence spans 126 residues: Holo-[acyl-carrier-protein] synthase (126 aa).

Mg(2+) contacts are provided by Asp9 and Glu58.

The protein belongs to the P-Pant transferase superfamily. AcpS family. Mg(2+) is required as a cofactor.

Its subcellular location is the cytoplasm. It catalyses the reaction apo-[ACP] + CoA = holo-[ACP] + adenosine 3',5'-bisphosphate + H(+). Transfers the 4'-phosphopantetheine moiety from coenzyme A to a Ser of acyl-carrier-protein. The sequence is that of Holo-[acyl-carrier-protein] synthase from Salmonella paratyphi B (strain ATCC BAA-1250 / SPB7).